The following is a 416-amino-acid chain: Histidine--tRNA ligase (416 aa).

It belongs to the class-II aminoacyl-tRNA synthetase family. Homodimer.

The protein localises to the cytoplasm. The catalysed reaction is tRNA(His) + L-histidine + ATP = L-histidyl-tRNA(His) + AMP + diphosphate + H(+). In Dictyoglomus thermophilum (strain ATCC 35947 / DSM 3960 / H-6-12), this protein is Histidine--tRNA ligase.